The primary structure comprises 76 residues: Large ribosomal subunit protein uL29 (76 aa).

The protein belongs to the universal ribosomal protein uL29 family.

In Corynebacterium aurimucosum (strain ATCC 700975 / DSM 44827 / CIP 107346 / CN-1) (Corynebacterium nigricans), this protein is Large ribosomal subunit protein uL29.